Here is a 475-residue protein sequence, read N- to C-terminus: Fez family zinc finger protein 1 (475 aa).

An Engrailed homology 1 repressor motif is present at residues 28–43 (PLAFSIERIMARTPEP). C2H2-type zinc fingers lie at residues 260–282 (FTCEVCGKVFNAHYNLTRHMPVH), 288–310 (FVCKVCGKGFRQASTLCRHKIIH), 316–338 (HKCNQCGKAFNRSSTLNTHTRIH), 344–366 (FVCEFCGKGFHQKGNYKNHKLTH), 372–394 (FKCNICNKAFHQVYNLTFHMHTH), and 400–423 (FTCPTCGKGFCRNFDLKKHVRKLH). The interval 425–475 (SSLGLTRTPTGEPSSDPPPQLQQPPPAPLPPLQPTLPPPGPLPSGLHQGHQ) is disordered. Residues 427 to 437 (LGLTRTPTGEP) show a composition bias toward polar residues. The span at 439-466 (SDPPPQLQQPPPAPLPPLQPTLPPPGPL) shows a compositional bias: pro residues.

Belongs to the krueppel C2H2-type zinc-finger protein family.

Its subcellular location is the nucleus. In terms of biological role, transcription repressor. Involved in the axonal projection and proper termination of olfactory sensory neurons (OSN). Plays a role in rostro-caudal patterning of the diencephalon and in prethalamic formation. Expression is required in OSN to cell-autonomously regulate OSN axon projections. Regulates non-cell-autonomously the layer formation of the olfactory bulb development and the interneurons. May be required for correct rostral migration of the interneuron progenitors. This chain is Fez family zinc finger protein 1 (Fezf1), found in Mus musculus (Mouse).